Here is a 274-residue protein sequence, read N- to C-terminus: Dermonecrotic toxin LarSicTox-alphaIB2bii (274 aa).

His3 is an active-site residue. Mg(2+)-binding residues include Glu23 and Asp25. Residue His39 is the Nucleophile of the active site. Intrachain disulfides connect Cys43–Cys49 and Cys45–Cys188. Asp83 is a binding site for Mg(2+). The N-linked (GlcNAc...) asparagine glycan is linked to Asn251.

Belongs to the arthropod phospholipase D family. Class II subfamily. The cofactor is Mg(2+). In terms of tissue distribution, expressed by the venom gland.

Its subcellular location is the secreted. It catalyses the reaction an N-(acyl)-sphingosylphosphocholine = an N-(acyl)-sphingosyl-1,3-cyclic phosphate + choline. The catalysed reaction is an N-(acyl)-sphingosylphosphoethanolamine = an N-(acyl)-sphingosyl-1,3-cyclic phosphate + ethanolamine. It carries out the reaction a 1-acyl-sn-glycero-3-phosphocholine = a 1-acyl-sn-glycero-2,3-cyclic phosphate + choline. The enzyme catalyses a 1-acyl-sn-glycero-3-phosphoethanolamine = a 1-acyl-sn-glycero-2,3-cyclic phosphate + ethanolamine. Functionally, dermonecrotic toxins cleave the phosphodiester linkage between the phosphate and headgroup of certain phospholipids (sphingolipid and lysolipid substrates), forming an alcohol (often choline) and a cyclic phosphate. This toxin acts on sphingomyelin (SM). It may also act on ceramide phosphoethanolamine (CPE), lysophosphatidylcholine (LPC) and lysophosphatidylethanolamine (LPE), but not on lysophosphatidylserine (LPS), and lysophosphatidylglycerol (LPG). It acts by transphosphatidylation, releasing exclusively cyclic phosphate products as second products. Induces dermonecrosis, hemolysis, increased vascular permeability, edema, inflammatory response, and platelet aggregation. The chain is Dermonecrotic toxin LarSicTox-alphaIB2bii from Loxosceles arizonica (Arizona brown spider).